Reading from the N-terminus, the 217-residue chain is FGFR1 oncogene partner 2 homolog (217 aa).

Coiled coils occupy residues 6–106 (TIEK…MSKY) and 163–188 (KEQE…TRES). Positions 194-217 (KEDASESTSLSGLVTSSDLSLRKS) are disordered. Residues 199 to 217 (ESTSLSGLVTSSDLSLRKS) show a composition bias toward polar residues.

The protein belongs to the SIKE family.

The protein resides in the cytoplasm. The sequence is that of FGFR1 oncogene partner 2 homolog (FGFR1OP2) from Gallus gallus (Chicken).